The following is a 145-amino-acid chain: LIM domain only protein 3 (145 aa).

LIM zinc-binding domains lie at 11–73 and 75–137; these read KGCA…LFGV and GNCA…GLMK.

In Bos taurus (Bovine), this protein is LIM domain only protein 3 (LMO3).